The primary structure comprises 598 residues: Torsin-1A-interacting protein 1 (598 aa).

The Nuclear segment spans residues 1 to 351 (MAGEGRRAEA…PQNASFVKRN (351 aa)). 2 disordered regions span residues 19–254 (VTPR…RSSS) and 267–314 (QNFT…IYGS). Serine 60 carries the phosphoserine modification. 2 stretches are compositionally biased toward basic and acidic residues: residues 73–101 (LVDKERSPVGKRTRLEEFRSDSAKEEVRE) and 115–124 (RPQEAEEMKT). 6 positions are modified to phosphoserine: serine 135, serine 143, serine 154, serine 156, serine 157, and serine 187. Residues 205-214 (EATSVQQKVN) are compositionally biased toward polar residues. Serine 216 is modified (phosphoserine). Residue threonine 221 is modified to Phosphothreonine. Residues serine 227, serine 230, and serine 242 each carry the phosphoserine modification. A compositionally biased stretch (basic and acidic residues) spans 238–250 (RSRDSDESGDKTT). Composition is skewed to polar residues over residues 277-287 (SVLSSGYQKTP) and 300-313 (RMQTSSPGKSSIYG). Serine 320 carries the phosphoserine modification. The interval 322–341 (LKSELGNQSPSTSSQQVTGQ) is disordered. Residue lysine 323 forms a Glycyl lysine isopeptide (Lys-Gly) (interchain with G-Cter in SUMO2) linkage. A compositionally biased stretch (polar residues) spans 326-341 (LGNQSPSTSSQQVTGQ). Serine 330 is modified (phosphoserine). A helical transmembrane segment spans residues 352–372 (WWWLLPLIAALASGSFWFFST). An interaction with TOR1A region spans residues 371–598 (STPEVETTAV…ENALKRGICL (228 aa)). Topologically, residues 373–598 (PEVETTAVQE…ENALKRGICL (226 aa)) are perinuclear space. A coiled-coil region spans residues 374–450 (EVETTAVQEF…SEQIADAYSS (77 aa)). A glycan (N-linked (GlcNAc...) asparagine) is linked at asparagine 414.

Belongs to the TOR1AIP family. As to quaternary structure, interacts with ATP1B4. Interacts with TOR1A (ATP-bound). Interacts with TOR1B, TOR2A and TOR3A.

It is found in the nucleus inner membrane. Functionally, required for nuclear membrane integrity. Induces TOR1A and TOR1B ATPase activity and is required for their location on the nuclear membrane. Binds to A- and B-type lamins. Possible role in membrane attachment and assembly of the nuclear lamina. In Pongo abelii (Sumatran orangutan), this protein is Torsin-1A-interacting protein 1 (TOR1AIP1).